Here is a 53-residue protein sequence, read N- to C-terminus: UPF0391 membrane protein Bcen2424_6479 (53 aa).

Helical transmembrane passes span 5–25 and 30–50; these read AIIF…GIAA and IAKI…LLGV.

This sequence belongs to the UPF0391 family.

Its subcellular location is the cell membrane. This chain is UPF0391 membrane protein Bcen2424_6479, found in Burkholderia cenocepacia (strain HI2424).